The following is a 1173-amino-acid chain: SMC5-SMC6 complex localization factor protein 2 (1173 aa).

Residues 1–109 form a disordered region; that stretch reads MTRRCMPARP…KPKRVPPEKS (109 aa). Composition is skewed to basic and acidic residues over residues 39–50 and 88–106; these read KRTESPGDRKQS and QFER…RVPP. The APIM motif signature appears at 137 to 149; it reads SLASKYLAKGTNI. Disordered stretches follow at residues 161–230, 256–275, 280–373, 394–620, and 635–663; these read MKSL…PEES, QMEQ…SLSL, ERKY…QKEK, KEPS…EEET, and TPAA…VHPG. Basic and acidic residues predominate over residues 181 to 199; that stretch reads ENNEKNDRDRGKTNADSKK. Composition is skewed to low complexity over residues 212–221 and 262–275; these read SSRSLSSRSS and NSEN…SLSL. Positions 280 to 293 are enriched in basic and acidic residues; that stretch reads ERKYKPRQEQRKQN. Residues 317 to 330 are compositionally biased toward polar residues; sequence SDSWEPTSAGSKQN. 2 stretches are compositionally biased toward basic and acidic residues: residues 339-349 and 355-373; these read NSVDSDLKSTR and KARE…QKEK. The segment covering 409-428 has biased composition (polar residues); the sequence is PSNSGNSGHHSTRNSDQIQV. Position 481 is a phosphoserine (serine 481). Residues 499-520 are compositionally biased toward basic and acidic residues; it reads SKKDKERSSSKECSGHSTESTK. Low complexity predominate over residues 571–592; the sequence is APSDKAPSEGESSGNSNAGSSA. Residues 602–619 show a composition bias toward acidic residues; that stretch reads DSDEESLGYNLDSDEEEE. Phosphoserine occurs at positions 603, 607, and 614. Residues 635 to 1173 form an interaction with SIMC1 region; that stretch reads TPAATGKPPA…QLHDFWVPDS (539 aa). The tract at residues 664–1166 is NSE6-like domain; that stretch reads TYTNTLERLV…NCRPTQGQLH (503 aa). Residues 702-1173 are required for interaction with SLF1 and RAD18; that stretch reads PIRIGEEDST…QLHDFWVPDS (472 aa).

It belongs to the FAM178 family. As to quaternary structure, forms a heterodimer with SIMC1. Interacts with SLF1 (via N-terminus); this interaction links RAD18 to the SMC5-SMC6 complex. Interacts with RAD18; this interaction is increased in a SLF1-dependent manner. Interacts with SMC5 and SMC6. As to expression, widely expressed. Expressed at higher level in skeletal muscle and at slightly lower level in brain, liver and heart, than in lung, kidney, spleen and thymus.

The protein resides in the nucleus. It is found in the PML body. Its function is as follows. Plays a role in the DNA damage response (DDR) pathway by regulating postreplication repair of UV-damaged DNA and genomic stability maintenance. The SLF1-SLF2 complex acts to link RAD18 with the SMC5-SMC6 complex at replication-coupled interstrand cross-links (ICL) and DNA double-strand breaks (DSBs) sites on chromatin during DNA repair in response to stalled replication forks. Promotes the recruitment of the SMC5-SMC6 complex to DNA lesions. Plays a role in SMC5-SMC6 complex recruitment for viral restriction. Forms a complex with SIMC1 and this complex is required to recruit SMC5-SMC6 complex to PML nuclear bodies and sites of viral replication. This chain is SMC5-SMC6 complex localization factor protein 2, found in Homo sapiens (Human).